The primary structure comprises 1044 residues: R3H domain-containing protein 2 (1044 aa).

Disordered regions lie at residues 23–71 (EESV…AKSN) and 106–147 (SCPS…QEYT). Positions 36–56 (PSKEDVEKEGEENGLRQETQR) are enriched in basic and acidic residues. S37 carries the post-translational modification Phosphoserine. A compositionally biased stretch (basic residues) spans 58–71 (TSSHGHARKRAKSN). Residues 109–143 (SDKEEEKSTKDVSEKEDKDKSKEKVPRKMLSRDSS) show a composition bias toward basic and acidic residues. S143 carries the post-translational modification Phosphoserine. The region spanning 169–232 (RMMLLKLEQE…AVIINKTSST (64 aa)) is the R3H domain. One can recognise an SUZ domain in the interval 233 to 303 (RIPEQRFSEH…VRERIFARET (71 aa)). Composition is skewed to basic and acidic residues over residues 261 to 270 (DASMDRDDNQ) and 277 to 288 (DGRRSKSIEERE). Disordered stretches follow at residues 261 to 288 (DASMDRDDNQMRVPLQDGRRSKSIEERE), 320 to 408 (SSSS…LSRP), 433 to 485 (CTAQ…FSPS), 502 to 533 (MAEDLSNPFGQMSLSRQGSTEAADPSSALFQP), 551 to 600 (GQPL…SNQQ), 729 to 770 (GTSP…SPSG), and 807 to 848 (GQKP…SLSN). Over residues 338-349 (SRTSSSRQSSTD) the composition is skewed to low complexity. 3 positions are modified to phosphoserine: S362, S365, and S381. The span at 433 to 449 (CTAQQQQQQQQQQQQLP) shows a compositional bias: low complexity. 2 stretches are compositionally biased toward polar residues: residues 509–521 (PFGQMSLSRQGST) and 554–572 (LPTSNYSTSSHAPPTQQVL). A compositionally biased stretch (low complexity) spans 757–770 (PQMSQQYSGVSPSG). A compositionally biased stretch (polar residues) spans 818 to 848 (GSPQANAQMGSSPVTSPTQSPAPSPVTSLSN). Residues S921 and S923 each carry the phosphoserine modification. Phosphothreonine occurs at positions 924 and 928.

It is found in the nucleus. This is R3H domain-containing protein 2 (R3hdm2) from Mus musculus (Mouse).